Here is a 162-residue protein sequence, read N- to C-terminus: Beta-lactoglobulin-1 (162 aa).

2 cysteine pairs are disulfide-bonded: Cys-66/Cys-160 and Cys-106/Cys-119.

The protein belongs to the calycin superfamily. Lipocalin family. As to quaternary structure, monomer.

It is found in the secreted. Its function is as follows. Lactoglobulin is the primary component of whey, it binds retinol and is probably involved in the transport of that molecule. The polypeptide is Beta-lactoglobulin-1 (LGB1) (Felis catus (Cat)).